The primary structure comprises 31 residues: Cytochrome b6-f complex subunit 6 (31 aa).

The helical transmembrane segment at 4–24 (ITSYFGFLLVALTITSALFIG) threads the bilayer.

Belongs to the PetL family. As to quaternary structure, the 4 large subunits of the cytochrome b6-f complex are cytochrome b6, subunit IV (17 kDa polypeptide, PetD), cytochrome f and the Rieske protein, while the 4 small subunits are PetG, PetL, PetM and PetN. The complex functions as a dimer.

The protein resides in the plastid. The protein localises to the chloroplast thylakoid membrane. Functionally, component of the cytochrome b6-f complex, which mediates electron transfer between photosystem II (PSII) and photosystem I (PSI), cyclic electron flow around PSI, and state transitions. PetL is important for photoautotrophic growth as well as for electron transfer efficiency and stability of the cytochrome b6-f complex. The polypeptide is Cytochrome b6-f complex subunit 6 (Pelargonium hortorum (Common geranium)).